The sequence spans 513 residues: GMP synthase [glutamine-hydrolyzing] (513 aa).

Positions M9–E198 constitute a Glutamine amidotransferase type-1 domain. Residue C86 is the Nucleophile of the active site. Active-site residues include H172 and E174. Residues W199–R388 form the GMPS ATP-PPase domain. S226–S232 is an ATP binding site.

Homodimer.

It catalyses the reaction XMP + L-glutamine + ATP + H2O = GMP + L-glutamate + AMP + diphosphate + 2 H(+). Its pathway is purine metabolism; GMP biosynthesis; GMP from XMP (L-Gln route): step 1/1. Catalyzes the synthesis of GMP from XMP. The polypeptide is GMP synthase [glutamine-hydrolyzing] (Staphylococcus carnosus (strain TM300)).